The sequence spans 360 residues: Phenylalanine--tRNA ligase alpha subunit (360 aa).

Position 260 (Glu260) interacts with Mg(2+).

Belongs to the class-II aminoacyl-tRNA synthetase family. Phe-tRNA synthetase alpha subunit type 1 subfamily. In terms of assembly, tetramer of two alpha and two beta subunits. It depends on Mg(2+) as a cofactor.

The protein resides in the cytoplasm. The catalysed reaction is tRNA(Phe) + L-phenylalanine + ATP = L-phenylalanyl-tRNA(Phe) + AMP + diphosphate + H(+). This chain is Phenylalanine--tRNA ligase alpha subunit, found in Rhodopseudomonas palustris (strain BisB5).